The sequence spans 558 residues: Polysialic acid transport protein KpsD (558 aa).

The N-terminal stretch at 1-20 (MKLFKSILLIAACHAAQASA) is a signal peptide.

This sequence to E.coli K1 KpsD.

It is found in the periplasm. Involved in the translocation of the polysialic acid capsule across the outer membrane to the cell surface. May function as the periplasmic binding element of the PSA transport system, in which it transiently interacts with the membrane component of the transporter, binds polysaccharide and transports the polymer to a component in the outer membrane. The protein is Polysialic acid transport protein KpsD (kpsD) of Escherichia coli.